A 166-amino-acid chain; its full sequence is Sec-independent protein translocase protein TatB (166 aa).

A helical transmembrane segment spans residues 2-22 (FDGIGFMELLLIGVLGLVVLG). The disordered stretch occupies residues 69 to 166 (SKGLSNLSPE…DTRSNPKANG (98 aa)). Composition is skewed to polar residues over residues 88–97 (QAAQSVNRPY) and 112–132 (QIHSPVASTVQTSPAQASQAN). Low complexity predominate over residues 133-153 (PTATVEASPTSASPATPSEPS). The segment covering 155-166 (GADTRSNPKANG) has biased composition (polar residues).

Belongs to the TatB family. As to quaternary structure, the Tat system comprises two distinct complexes: a TatABC complex, containing multiple copies of TatA, TatB and TatC subunits, and a separate TatA complex, containing only TatA subunits. Substrates initially bind to the TatABC complex, which probably triggers association of the separate TatA complex to form the active translocon.

It localises to the cell inner membrane. Functionally, part of the twin-arginine translocation (Tat) system that transports large folded proteins containing a characteristic twin-arginine motif in their signal peptide across membranes. Together with TatC, TatB is part of a receptor directly interacting with Tat signal peptides. TatB may form an oligomeric binding site that transiently accommodates folded Tat precursor proteins before their translocation. The protein is Sec-independent protein translocase protein TatB of Shewanella baltica (strain OS223).